We begin with the raw amino-acid sequence, 1207 residues long: DNA-directed RNA polymerase subunit beta (1207 aa).

The protein belongs to the RNA polymerase beta chain family. As to quaternary structure, the RNAP catalytic core consists of 2 alpha, 1 beta, 1 beta' and 1 omega subunit. When a sigma factor is associated with the core the holoenzyme is formed, which can initiate transcription.

It catalyses the reaction RNA(n) + a ribonucleoside 5'-triphosphate = RNA(n+1) + diphosphate. In terms of biological role, DNA-dependent RNA polymerase catalyzes the transcription of DNA into RNA using the four ribonucleoside triphosphates as substrates. This is DNA-directed RNA polymerase subunit beta from Enterococcus faecalis (strain ATCC 700802 / V583).